A 255-amino-acid chain; its full sequence is uncharacterized protein (255 aa).

This sequence belongs to the methyltransferase superfamily.

This is an uncharacterized protein from Mycobacterium ulcerans (strain Agy99).